The primary structure comprises 484 residues: tRNA sulfurtransferase (484 aa).

One can recognise a THUMP domain in the interval 63-167; the sequence is REMIERLTCT…LDRLFVIHRQ (105 aa). Residues 185–186, Lys267, Gly289, and Gln298 contribute to the ATP site; that span reads LM. Cys346 and Cys457 are joined by a disulfide. Positions 405–483 constitute a Rhodanese domain; it reads VLPGQIVIDI…GHTNVRVYRP (79 aa). Cys457 serves as the catalytic Cysteine persulfide intermediate.

This sequence belongs to the ThiI family.

The protein resides in the cytoplasm. It catalyses the reaction [ThiI sulfur-carrier protein]-S-sulfanyl-L-cysteine + a uridine in tRNA + 2 reduced [2Fe-2S]-[ferredoxin] + ATP + H(+) = [ThiI sulfur-carrier protein]-L-cysteine + a 4-thiouridine in tRNA + 2 oxidized [2Fe-2S]-[ferredoxin] + AMP + diphosphate. It carries out the reaction [ThiS sulfur-carrier protein]-C-terminal Gly-Gly-AMP + S-sulfanyl-L-cysteinyl-[cysteine desulfurase] + AH2 = [ThiS sulfur-carrier protein]-C-terminal-Gly-aminoethanethioate + L-cysteinyl-[cysteine desulfurase] + A + AMP + 2 H(+). Its pathway is cofactor biosynthesis; thiamine diphosphate biosynthesis. Its function is as follows. Catalyzes the ATP-dependent transfer of a sulfur to tRNA to produce 4-thiouridine in position 8 of tRNAs, which functions as a near-UV photosensor. Also catalyzes the transfer of sulfur to the sulfur carrier protein ThiS, forming ThiS-thiocarboxylate. This is a step in the synthesis of thiazole, in the thiamine biosynthesis pathway. The sulfur is donated as persulfide by IscS. The chain is tRNA sulfurtransferase from Pseudomonas aeruginosa (strain UCBPP-PA14).